Consider the following 532-residue polypeptide: Probable cytochrome c oxidase subunit 1 (532 aa).

Helical transmembrane passes span 33-53 (IMYI…SLLF), 74-94 (VLIT…ALFG), 95-115 (GFGN…FPRL), 118-138 (ISFW…FVDG), 163-183 (MAIF…INLI), 200-220 (PLFV…MPVL), 252-272 (LFWF…FGIV), and 284-304 (IFGY…GFIV). His-79 is a Fe(II)-heme a binding site. Positions 258 and 262 each coordinate Cu cation. His-307 and His-308 together coordinate Cu cation. 2 helical membrane-spanning segments follow: residues 318 to 338 (ALIY…IKIF) and 355 to 375 (MLFS…GIIL). Residue His-393 coordinates heme a3. The next 3 helical transmembrane spans lie at 394–414 (FHYT…YYWF), 431–451 (FWIT…LGLA), and 473–493 (IGAG…FYTL). His-395 is a Fe(II)-heme a binding site.

The protein belongs to the heme-copper respiratory oxidase family.

It is found in the cell membrane. The enzyme catalyses 4 Fe(II)-[cytochrome c] + O2 + 8 H(+)(in) = 4 Fe(III)-[cytochrome c] + 2 H2O + 4 H(+)(out). The protein operates within energy metabolism; oxidative phosphorylation. Its function is as follows. Cytochrome c oxidase is the component of the respiratory chain that catalyzes the reduction of oxygen to water. Subunits 1-3 form the functional core of the enzyme complex. CO I is the catalytic subunit of the enzyme. Electrons originating in cytochrome c are transferred via the copper A center of subunit 2 and heme A of subunit 1 to the bimetallic center formed by heme A3 and copper B. The chain is Probable cytochrome c oxidase subunit 1 (ctaD) from Rickettsia conorii (strain ATCC VR-613 / Malish 7).